Here is a 267-residue protein sequence, read N- to C-terminus: Large ribosomal subunit protein mL57 (267 aa).

Residues 43 to 54 (SSSAVQQEQDAS) show a composition bias toward low complexity. Residues 43-73 (SSSAVQQEQDASGTSSSQQPRPRWSYTPERM) form a disordered region.

Belongs to the ribonuclease III family. Mitochondrion-specific ribosomal protein mL57 subfamily. In terms of assembly, component of the mitochondrial large ribosomal subunit (mt-LSU). Mature N.crassa 74S mitochondrial ribosomes consist of a small (37S) and a large (54S) subunit. The 37S small subunit contains a 16S ribosomal RNA (16S mt-rRNA) and 32 different proteins. The 54S large subunit contains a 23S rRNA (23S mt-rRNA) and 42 different proteins. mL57 forms a heterodimer with mL44 and stabilizes rRNA expansion segments 1/2 at a membrane-facing protuberance close to the point of attachment of the ribosome to the translocon in the membrane.

It localises to the mitochondrion. Functionally, component of the mitochondrial ribosome (mitoribosome), a dedicated translation machinery responsible for the synthesis of mitochondrial genome-encoded proteins, including at least some of the essential transmembrane subunits of the mitochondrial respiratory chain. The mitoribosomes are attached to the mitochondrial inner membrane and translation products are cotranslationally integrated into the membrane. In Neurospora crassa (strain ATCC 24698 / 74-OR23-1A / CBS 708.71 / DSM 1257 / FGSC 987), this protein is Large ribosomal subunit protein mL57 (mrpl15).